A 294-amino-acid polypeptide reads, in one-letter code: Acetyl-coenzyme A carboxylase carboxyl transferase subunit beta (294 aa).

The region spanning 29–294 (LWEKCPECGQ…TQEVKLQTNA (266 aa)) is the CoA carboxyltransferase N-terminal domain. Residues Cys33, Cys36, Cys52, and Cys55 each coordinate Zn(2+). The C4-type zinc-finger motif lies at 33 to 55 (CPECGQVVYRKDLIDNCSVCSNC).

The protein belongs to the AccD/PCCB family. Acetyl-CoA carboxylase is a heterohexamer composed of biotin carboxyl carrier protein (AccB), biotin carboxylase (AccC) and two subunits each of ACCase subunit alpha (AccA) and ACCase subunit beta (AccD). It depends on Zn(2+) as a cofactor.

It localises to the cytoplasm. It carries out the reaction N(6)-carboxybiotinyl-L-lysyl-[protein] + acetyl-CoA = N(6)-biotinyl-L-lysyl-[protein] + malonyl-CoA. The protein operates within lipid metabolism; malonyl-CoA biosynthesis; malonyl-CoA from acetyl-CoA: step 1/1. Component of the acetyl coenzyme A carboxylase (ACC) complex. Biotin carboxylase (BC) catalyzes the carboxylation of biotin on its carrier protein (BCCP) and then the CO(2) group is transferred by the transcarboxylase to acetyl-CoA to form malonyl-CoA. The sequence is that of Acetyl-coenzyme A carboxylase carboxyl transferase subunit beta from Prochlorococcus marinus (strain NATL1A).